A 374-amino-acid chain; its full sequence is Queuine tRNA-ribosyltransferase (374 aa).

Catalysis depends on aspartate 91, which acts as the Proton acceptor. Residues 91–95 (DSGGY), aspartate 145, glutamine 189, and glycine 216 each bind substrate. The tract at residues 247-253 (GVGTVPD) is RNA binding. The Nucleophile role is filled by aspartate 266. Residues 271-275 (TRNAR) form an RNA binding; important for wobble base 34 recognition region. Cysteine 304, cysteine 306, cysteine 309, and histidine 335 together coordinate Zn(2+).

Belongs to the queuine tRNA-ribosyltransferase family. In terms of assembly, homodimer. Within each dimer, one monomer is responsible for RNA recognition and catalysis, while the other monomer binds to the replacement base PreQ1. Zn(2+) is required as a cofactor.

It catalyses the reaction 7-aminomethyl-7-carbaguanine + guanosine(34) in tRNA = 7-aminomethyl-7-carbaguanosine(34) in tRNA + guanine. It participates in tRNA modification; tRNA-queuosine biosynthesis. In terms of biological role, catalyzes the base-exchange of a guanine (G) residue with the queuine precursor 7-aminomethyl-7-deazaguanine (PreQ1) at position 34 (anticodon wobble position) in tRNAs with GU(N) anticodons (tRNA-Asp, -Asn, -His and -Tyr). Catalysis occurs through a double-displacement mechanism. The nucleophile active site attacks the C1' of nucleotide 34 to detach the guanine base from the RNA, forming a covalent enzyme-RNA intermediate. The proton acceptor active site deprotonates the incoming PreQ1, allowing a nucleophilic attack on the C1' of the ribose to form the product. After dissociation, two additional enzymatic reactions on the tRNA convert PreQ1 to queuine (Q), resulting in the hypermodified nucleoside queuosine (7-(((4,5-cis-dihydroxy-2-cyclopenten-1-yl)amino)methyl)-7-deazaguanosine). This is Queuine tRNA-ribosyltransferase from Leptospira interrogans serogroup Icterohaemorrhagiae serovar Lai (strain 56601).